A 262-amino-acid polypeptide reads, in one-letter code: Expansin-A13 (262 aa).

The first 22 residues, 1-22 (MAGVARMLAAVVCAIMPAAAMA), serve as a signal peptide directing secretion. The region spanning 52–167 (GGACGYGNLY…QRVPCMKKGG (116 aa)) is the Expansin-like EG45 domain. The 81-residue stretch at 177–257 (YFQLVLLTNV…GWRFGQTFAS (81 aa)) folds into the Expansin-like CBD domain.

It belongs to the expansin family. Expansin A subfamily. Expressed in roots and flowers.

Its subcellular location is the secreted. The protein localises to the cell wall. It is found in the membrane. In terms of biological role, may cause loosening and extension of plant cell walls by disrupting non-covalent bonding between cellulose microfibrils and matrix glucans. No enzymatic activity has been found. May be required for rapid internodal elongation in deepwater rice during submergence. The protein is Expansin-A13 (EXPA13) of Oryza sativa subsp. japonica (Rice).